The sequence spans 618 residues: Phosphoenolpyruvate carboxykinase [GTP] (618 aa).

Substrate contacts are provided by residues Arg-83 and 217 to 219; that span reads YGG. Mn(2+) contacts are provided by Lys-226 and His-245. Ser-267 lines the substrate pocket. 268–273 provides a ligand contact to GTP; sequence MCGKTS. Residue Cys-269 is part of the active site. Asp-286 is a binding site for Mn(2+). A substrate-binding site is contributed by 381–383; that stretch reads NAR. GTP is bound by residues Arg-383 and Arg-415.

It belongs to the phosphoenolpyruvate carboxykinase [GTP] family. The cofactor is Mn(2+).

Its subcellular location is the cytoplasm. The enzyme catalyses oxaloacetate + GTP = phosphoenolpyruvate + GDP + CO2. It functions in the pathway carbohydrate biosynthesis; gluconeogenesis. Catalyzes the conversion of oxaloacetate (OAA) to phosphoenolpyruvate (PEP), the rate-limiting step in the metabolic pathway that produces glucose from lactate and other precursors derived from the citric acid cycle. In Pyrococcus abyssi (strain GE5 / Orsay), this protein is Phosphoenolpyruvate carboxykinase [GTP].